Here is a 538-residue protein sequence, read N- to C-terminus: Lipid scramblase CLPTM1L (538 aa).

Over 1 to 9 (MFPKTSFTS) the chain is Cytoplasmic. The helical transmembrane segment at 10–30 (LIVGVFLLYVLHTCWVMYGIV) threads the bilayer. Over 31-284 (YTKPCEKRRA…IKGIFVDTNL (254 aa)) the chain is Extracellular. N-linked (GlcNAc...) asparagine glycosylation is found at asparagine 90 and asparagine 100. The tract at residues 140-166 (ISLITGQDEPEKPDQQKQSSDSELDRP) is disordered. Asparagine 229 carries an N-linked (GlcNAc...) asparagine glycan. The helical transmembrane segment at 285-305 (YFLALTFFVAAFHLLFDFLAF) threads the bilayer. At 306–324 (KNDISFWKHKKSMVGMSSK) the chain is on the cytoplasmic side. A helical membrane pass occupies residues 325–341 (AVLWRCFSTIVIFLYLL). At 342–402 (DEQTSLLVLV…TEEYDTLAMK (61 aa)) the chain is on the extracellular side. Residues 403-423 (YLSYLLYPLCVGGAVYALVFV) form a helical membrane-spanning segment. Topologically, residues 424-428 (KYKSW) are cytoplasmic. The helical transmembrane segment at 429–449 (YSWIINSLVNGVYAFGFLFML) threads the bilayer. Residues 450–538 (PQLFVNYKLK…EKPKGKSHED (89 aa)) are Extracellular-facing.

Belongs to the CLPTM1 family.

It is found in the endoplasmic reticulum membrane. It carries out the reaction a 6-(alpha-D-glucosaminyl)-1-(1,2-diacyl-sn-glycero-3-phospho)-1D-myo-inositol(in) = a 6-(alpha-D-glucosaminyl)-1-(1,2-diacyl-sn-glycero-3-phospho)-1D-myo-inositol(out). The catalysed reaction is 6-(alpha-D-glucosaminyl)-(1-octadecanoyl,2-(9Z)-octadecenoyl-sn-glycero-3-phospho)-1D-myo-inositol(in) = 6-(alpha-D-glucosaminyl)-(1-octadecanoyl,2-(9Z)-octadecenoyl-sn-glycero-3-phospho)-1D-myo-inositol(out). It catalyses the reaction a 1,2-diacyl-sn-glycero-3-phospho-(1D-myo-inositol)(in) = a 1,2-diacyl-sn-glycero-3-phospho-(1D-myo-inositol)(out). The enzyme catalyses a 1,2-diacyl-sn-glycero-3-phosphocholine(in) = a 1,2-diacyl-sn-glycero-3-phosphocholine(out). It carries out the reaction a 1,2-diacyl-sn-glycero-3-phosphoethanolamine(in) = a 1,2-diacyl-sn-glycero-3-phosphoethanolamine(out). In terms of biological role, scramblase that mediates the translocation of glucosaminylphosphatidylinositol (alpha-D-GlcN-(1-6)-(1,2-diacyl-sn-glycero-3-phospho)-1D-myo-inositol, GlcN-PI) across the endoplasmic reticulum (ER) membrane, from the cytosolic leaflet to the luminal leaflet of the ER membrane, where it participates in the biosynthesis of glycosylphosphatidylinositol (GPI). GPI is a lipid glycoconjugate involved in post-translational modification of proteins. Can also translocate 1,2-diacyl-sn-glycero-3-phospho-(1D-myo-inositol) (phosphatidylinositol or PI), as well as several other phospholipids (1,2-diacyl-sn-glycero-3-phosphocholine, 1,2-diacyl-sn-glycero-3-phosphoethanolamine), and N-acetylglucosaminylphosphatidylinositol (GlcNAc-PI) in vitro. The protein is Lipid scramblase CLPTM1L (clptm1l) of Danio rerio (Zebrafish).